A 387-amino-acid chain; its full sequence is MNNVVIVDCIRTPMGRSKAGAFRNVRAEDLSAHLMKGLISRNPQLDPNSIEDIYWGCVQQTLEQGFNVARNASLLAGIPHTVAATTVNRLCGSSMQALHDATRAIMVGDAETCIIGGVEHMGHVPMNHGVDFHPGMSKSVAKAAGMMGLTAEMLGRMHGISRQMQDEFAARSHQRAHAATIEGRFKNEILPIEGHDENGILKLYDYDEVIRPETTVEGLSNLRPAFDPVNGTVTAGSSSALSDGASAMLVMSEHRAKELGLTIRARVKSMAVAGCDPSIMGYGPVPATQKALKRAGLSIDDIGMVELNEAFAAQSLPCAKDLGLLDKIDEKVNLNGGAIALGHPLGCSGSRISTTLINQMEHHDVQFGLATMCIGLGQGIATVFERV.

The Acyl-thioester intermediate role is filled by C91. Catalysis depends on proton acceptor residues H343 and C373.

It belongs to the thiolase-like superfamily. Thiolase family. In terms of assembly, heterotetramer of two alpha chains (FadB) and two beta chains (FadA).

The protein resides in the cytoplasm. The enzyme catalyses an acyl-CoA + acetyl-CoA = a 3-oxoacyl-CoA + CoA. It functions in the pathway lipid metabolism; fatty acid beta-oxidation. Catalyzes the final step of fatty acid oxidation in which acetyl-CoA is released and the CoA ester of a fatty acid two carbons shorter is formed. The protein is 3-ketoacyl-CoA thiolase of Photobacterium profundum (strain SS9).